We begin with the raw amino-acid sequence, 397 residues long: MKILVVNCGSSSLKYQLIDMTSEEALAKGLVERIGIEGSILTQKVNGEKYIIEEPMKDHKKAIELVLKALVDKEHGVISDMSEIAAVGHRVVHGGEKYASSVLIDDEVMKALEDCVKLAPLHNPPNIIGINACRELMPKTPMVAVFDTAFHQTLPDYAYMYPLPYELYEQNGIRKYGFHGTSHRYVSSVASDMMGKDLKDLKVITCHLGNGASLCAVKEGKSVETSMGFTPLAGLAMGTRCGDIDPAILLFMERELKMSPDEVDAVINKKSGVLGISGVSSDFRDIEGAAKEGNKRAKLALDVYHYTVRQTIGAYTAVLNGVDAIVFTAGLGENSAASREEILNGLEYLGIKIDAEKNKQRGKQIEISTEDSKVKVFVIPTDEELMIARDTKEITAK.

Mg(2+) is bound at residue asparagine 7. ATP is bound at residue lysine 14. Arginine 90 provides a ligand contact to substrate. Aspartate 147 (proton donor/acceptor) is an active-site residue. ATP contacts are provided by residues 207–211 (HLGNG), 282–284 (DFR), and 330–334 (GLGEN). Residue glutamate 383 participates in Mg(2+) binding.

It belongs to the acetokinase family. In terms of assembly, homodimer. Mg(2+) serves as cofactor. It depends on Mn(2+) as a cofactor.

The protein localises to the cytoplasm. The catalysed reaction is acetate + ATP = acetyl phosphate + ADP. Its pathway is metabolic intermediate biosynthesis; acetyl-CoA biosynthesis; acetyl-CoA from acetate: step 1/2. Functionally, catalyzes the formation of acetyl phosphate from acetate and ATP. Can also catalyze the reverse reaction. The sequence is that of Acetate kinase from Clostridium botulinum (strain Loch Maree / Type A3).